Consider the following 889-residue polypeptide: DNA-directed RNA polymerase subunit Rpo1N (889 aa).

Residues Cys-62, Cys-65, Cys-72, His-75, Cys-102, Cys-105, Cys-149, and Cys-152 each contribute to the Zn(2+) site. Mg(2+) contacts are provided by Asp-466, Asp-468, and Asp-470.

Belongs to the RNA polymerase beta' chain family. Part of the RNA polymerase complex. It depends on Mg(2+) as a cofactor. Requires Zn(2+) as cofactor.

Its subcellular location is the cytoplasm. It carries out the reaction RNA(n) + a ribonucleoside 5'-triphosphate = RNA(n+1) + diphosphate. In terms of biological role, DNA-dependent RNA polymerase (RNAP) catalyzes the transcription of DNA into RNA using the four ribonucleoside triphosphates as substrates. Forms the clamp head domain. This chain is DNA-directed RNA polymerase subunit Rpo1N, found in Methanococcus vannielii (strain ATCC 35089 / DSM 1224 / JCM 13029 / OCM 148 / SB).